Consider the following 440-residue polypeptide: Trigger factor (440 aa).

The PPIase FKBP-type domain maps to 163–248 (GDGVTVDFEG…VKKIESAHLP (86 aa)).

It belongs to the FKBP-type PPIase family. Tig subfamily.

The protein localises to the cytoplasm. The catalysed reaction is [protein]-peptidylproline (omega=180) = [protein]-peptidylproline (omega=0). In terms of biological role, involved in protein export. Acts as a chaperone by maintaining the newly synthesized protein in an open conformation. Functions as a peptidyl-prolyl cis-trans isomerase. This Verminephrobacter eiseniae (strain EF01-2) protein is Trigger factor.